The chain runs to 1058 residues: MNDTKTPGDKTLHPAPGKTLTLKRPVEQGTVRQSFSHGRSKSVVVEKVKRRVFAPGEAGAPSGTPAAAPAATPAPAAAAPRPATPAPAAPRPAAPATPAQPAAEAKAPAPAPTPAPAAPAAPVAEAPKVEAPAPVAAKPEAAPAAPVAEAPKVEVPAPAPAPAEPVAAQPAAPVAAAPAAPARAPEAPRPAVSAPRPAATTSSGSSSSSSRPAAGGAQRSGAAPQRPGTSGGPGRPGAPASGQRSGGPGSDRRGGPGGQNRPGQNRQGGSGVVLRTLTEEERNARASALADARVREVEERRMAEERRIAEEEARRRAERERAERAEREAAEARKREEESRRALEDESKRRAEQEARKRFGEETGRSGGASAPSTSTARPLTPRPAGTTTTTGAPAAGEEEDRRPRRGGGVPPRPAAPVKLPKSAGGEKHRGRLTVVTAQSGEEERQRSVASFRRRTQRMTGHRGMQESKEKIVREVVLPETITIQELANRMSERAVDVIRMLMKQGQMVKITDVIDADTAELIAADLGHTVRRVSESDVEEGLFDSADAPEDLLPRPPVVTIMGHVDHGKTSLLDSLRKANVVSGEAGGITQHIGAYQVTSPLGGKITFIDTPGHAAFTAMRARGAKVTDIVVLVVAADDGVMPQTVEAINHARAAKVPLIVAINKIDKPDAKPERVRSELLQYEVQVESMGGDTLEVEVSATKQINLDKLLEAISLQSEVLDLKANPDRPAEGTVVEAKLDRGRGPVATVLVQRGTLRVGDIVVAGAEFGRVRALITDTGATTTEAGPSVPVEVLGFNGTPEAGDRLAVVESEARAREITEYRQRQKREKAAARSAVVRGSLEQMMSQVRSTGRKEFPLIIKGDVSGSVEAIIGALEKLGNDEVQARIIHSGAGGINESDVTLAETSGAAIIGFNVRANKEARDSAERAGIEIRYYNIIYDLVDDVKKAMSGLLAPITRETMLGNALILEIFNVSKVGKVAGCRVTDGTVERGQHVRLIRDNVVIHEGKLATLNRFKDAVKEVLAGQECGMSFENYQDMRAGDVIECYRVEVVQRSL.

A compositionally biased stretch (basic and acidic residues) spans M1–L12. The interval M1–S468 is disordered. Residues A54 to R81 are compositionally biased toward low complexity. A compositionally biased stretch (pro residues) spans P82–P95. Low complexity predominate over residues A96–P108. Residues A109–P119 are compositionally biased toward pro residues. 2 stretches are compositionally biased toward low complexity: residues A120–P156 and E164–G228. The span at R244–G271 shows a compositional bias: gly residues. Residues A292–G364 show a composition bias toward basic and acidic residues. The segment covering G368–A396 has biased composition (low complexity). Over residues F452–G461 the composition is skewed to basic residues. The 171-residue stretch at P555–K725 folds into the tr-type G domain. The segment at G564–T571 is G1. Residue G564 to T571 participates in GTP binding. The interval G589–H593 is G2. Residues D611–G614 are G3. GTP contacts are provided by residues D611 to H615 and N665 to D668. The interval N665–D668 is G4. Residues S701 to T703 are G5.

It belongs to the TRAFAC class translation factor GTPase superfamily. Classic translation factor GTPase family. IF-2 subfamily.

Its subcellular location is the cytoplasm. One of the essential components for the initiation of protein synthesis. Protects formylmethionyl-tRNA from spontaneous hydrolysis and promotes its binding to the 30S ribosomal subunits. Also involved in the hydrolysis of GTP during the formation of the 70S ribosomal complex. This is Translation initiation factor IF-2 from Azorhizobium caulinodans (strain ATCC 43989 / DSM 5975 / JCM 20966 / LMG 6465 / NBRC 14845 / NCIMB 13405 / ORS 571).